A 146-amino-acid polypeptide reads, in one-letter code: uncharacterized protein (146 aa).

4 helical membrane passes run 1-21 (MFANAGLSPFVAIWTARAASL), 35-55 (AAVYVGSAVVPAAVAGPLFVG), 87-107 (GGAGGWVGVHCPVVGGGGVGH), and 111-131 (AIAAAVSVHSTCMPAAFGGHL).

The protein localises to the cell membrane. This is an uncharacterized protein from Mycobacterium tuberculosis (strain CDC 1551 / Oshkosh).